A 319-amino-acid polypeptide reads, in one-letter code: Protoheme IX farnesyltransferase (319 aa).

8 helical membrane passes run 59-79, 108-128, 131-151, 158-178, 183-203, 232-252, 254-274, and 299-319; these read IGLILATLVGGAFAAGSAGAF, EALVFSWLLGAAAIAILWFGA, LSAWLGLGAIFFYVVIYTIIL, NIVWGGAAGCFPVLIAWAAVT, WPAIILFMVIFLWTPPHYWPL, VVLYAWAMVACSLLMVPAGGA, WVYTVTAVLAGAWFLYESHAL, and LTLLFIALAVDPFVGPAVIGG.

The protein belongs to the UbiA prenyltransferase family. Protoheme IX farnesyltransferase subfamily.

Its subcellular location is the cell membrane. It catalyses the reaction heme b + (2E,6E)-farnesyl diphosphate + H2O = Fe(II)-heme o + diphosphate. Its pathway is porphyrin-containing compound metabolism; heme O biosynthesis; heme O from protoheme: step 1/1. In terms of biological role, converts heme B (protoheme IX) to heme O by substitution of the vinyl group on carbon 2 of heme B porphyrin ring with a hydroxyethyl farnesyl side group. This chain is Protoheme IX farnesyltransferase, found in Pseudarthrobacter chlorophenolicus (strain ATCC 700700 / DSM 12829 / CIP 107037 / JCM 12360 / KCTC 9906 / NCIMB 13794 / A6) (Arthrobacter chlorophenolicus).